Here is a 346-residue protein sequence, read N- to C-terminus: UPF0053 protein sll1254 (346 aa).

4 helical membrane passes run 1-21 (MLEI…CSCA), 58-78 (IGTI…TIGA), 87-107 (AWMG…GEII), and 121-141 (LLIA…VWLI). In terms of domain architecture, CNNM transmembrane spans 1–179 (MLEIVAAIFI…YKEGVIEGDE (179 aa)). 2 consecutive CBS domains span residues 198-259 (MTPR…GYKT) and 263-320 (LARP…IVDE).

This sequence belongs to the UPF0053 family.

Its subcellular location is the cell membrane. This chain is UPF0053 protein sll1254, found in Synechocystis sp. (strain ATCC 27184 / PCC 6803 / Kazusa).